The sequence spans 365 residues: Phosphatidylcholine:ceramide cholinephosphotransferase 4 (365 aa).

Residues 1-44 (MISYPFFSLSPPGLVPPPMAVPPVEMYSGSFWNRMRKPLPLRTQ) lie on the Cytoplasmic side of the membrane. Residues 45-65 (VIRFTVVFVIVSFILAVALQI) form a helical membrane-spanning segment. The Lumenal segment spans residues 66-92 (THERMPDPKVTKPLPDLGFELLTKVPG). The helical transmembrane segment at 93–113 (MYVLADCCIGFLNILSVFTAF) threads the bilayer. Over 114 to 165 (KLYLLHRHCVGSGEPELPCNIPGVSRFFLSVWLCKENCRIELRNIHTIAWIR) the chain is Cytoplasmic. A helical membrane pass occupies residues 166-186 (FITSYALLLLFRSAVIVMTSL). At 187–229 (PAPDDLCQDPPKIENPVKNVILTVLTAGGGSIHCGDLMYSGHT) the chain is on the lumenal side. His228 is an active-site residue. Residues 230–250 (VILTLHLMFHWIYGAMVHWSF) form a helical membrane-spanning segment. Residue Arg251 is a topological domain, cytoplasmic. A helical transmembrane segment spans residues 252–272 (PVVTVVAIFGYYCIVASRFHY). Active-site residues include His271 and Asp275. Residues 273 to 275 (TDD) are Lumenal-facing. The helical transmembrane segment at 276–296 (VLVAIYLTIATFIAVGHNADG) threads the bilayer. The Cytoplasmic segment spans residues 297–365 (APWQLQLFIR…SLMFKCGAYV (69 aa)).

The protein belongs to the sphingomyelin synthase family.

It localises to the golgi apparatus membrane. The enzyme catalyses an N-acylsphing-4-enine + a 1,2-diacyl-sn-glycero-3-phosphocholine = a sphingomyelin + a 1,2-diacyl-sn-glycerol. The catalysed reaction is an N-acylsphinganine + a 1,2-diacyl-sn-glycero-3-phosphocholine = an N-acylsphinganine-1-phosphocholine + a 1,2-diacyl-sn-glycerol. It catalyses the reaction an N-acylsphing-4-enine + a 1,2-diacyl-sn-glycero-3-phosphoethanolamine = an N-acylsphing-4-enine 1-phosphoethanolamine + a 1,2-diacyl-sn-glycerol. It carries out the reaction an N-acylsphinganine + a 1,2-diacyl-sn-glycero-3-phosphoethanolamine = an N-acylsphinganine-1-phosphoethanolamine + a 1,2-diacyl-sn-glycerol. The enzyme catalyses a 1,2-diacyl-sn-glycero-3-phospho-(1D-myo-inositol) + an N-acylsphing-4-enine = an N-acylsphing-4-enine-(1D-myo-inositol) + a 1,2-diacyl-sn-glycerol. The catalysed reaction is an N-acylsphinganine + a 1,2-diacyl-sn-glycero-3-phospho-(1D-myo-inositol) = an N-acylsphinganine-(1D-myo-inositol) + a 1,2-diacyl-sn-glycerol. In terms of biological role, bifunctional sphingomyelin (SM)/ethanolamine phosphorylceramide (EPC) synthase with minimal inositol phosphorylceramide (IPC) synthase activity. Specificity is likely to be defined by residues in the lumenal catalytic domain that interact with the polar head groups of the phospholipid donors. SM is synthesized by both stages of the parasite life cycle, bloodstream forms (BSF) and procyclic forms (PCF), by transferring the phosphoryl headgroup from a 1,2-diacyl-sn-glycero-3-phosphocholine to an N-acylsphing-4-enine (ceramide) or an N-acylsphinganine (dihydroceramide) with release of 1,2-diacyl-sn-glycerol. Also catalyzes the reverse reaction, production of ceramide from sphingomyelin. EPC is synthesized by transferring phosphoethanolamine from a 1,2-diacyl-sn-glycero-3-phosphoethanolamine to ceramide or dihydroceramide by BSF and PCF, while IPC is confined to PCF. The ceramide/dihydroceramide ratios are skewed towards dihydroceramide in PCF parasites and ceramide in BSF parasites, this is likely due to differential expression and/or regulation of dihydroceramide desaturase, the enzyme responsible for converting dihydroceramide to ceramide. The polypeptide is Phosphatidylcholine:ceramide cholinephosphotransferase 4 (Trypanosoma brucei brucei).